A 463-amino-acid polypeptide reads, in one-letter code: Mitochondrial dynamics protein MID51 (463 aa).

The Mitochondrial intermembrane segment spans residues 1 to 23 (MAGAGERKGKKDDNGIGTAIDFV). The chain crosses the membrane as a helical span at residues 24–46 (LSNARLVLGVGGAAMLGIATLAV). Residues 47–463 (KRMYDRAISA…LSEPEVLLQT (417 aa)) lie on the Cytoplasmic side of the membrane. The segment at 49–195 (MYDRAISAPT…LSGSLYDDLQ (147 aa)) is dimerization. A phosphoserine mark is found at Ser55, Ser59, Ser79, and Ser94. The segment at 57–77 (PTSPTRLSHSGKRSWEEPNWM) is disordered. Residues 160-169 (AAVDICAELR) are important for interaction with DNM1L. Residues Ser187, Ser189, and His201 each contribute to the ADP site. An important for interaction with DNM1L region spans residues 234-243 (RRENPEYFPR). Residues Ser340, Arg342, and Lys368 each coordinate ADP.

Belongs to the MID49/MID51 family. In terms of assembly, homodimer. Interacts with DNM1L.

Its subcellular location is the mitochondrion outer membrane. In terms of biological role, mitochondrial outer membrane protein which regulates mitochondrial fission/fusion dynamics. Promotes the recruitment and association of the fission mediator dynamin-related protein 1 (DNM1L) to the mitochondrial surface independently of the mitochondrial fission FIS1 and MFF proteins. Regulates DNM1L GTPase activity and DNM1L oligomerization. Binds ADP and can also bind GDP, although with lower affinity. Does not bind CDP, UDP, ATP, AMP or GTP. Inhibits DNM1L GTPase activity in the absence of bound ADP. Requires ADP to stimulate DNM1L GTPase activity and the assembly of DNM1L into long, oligomeric tubules with a spiral pattern, as opposed to the ring-like DNM1L oligomers observed in the absence of bound ADP. Does not require ADP for its function in recruiting DNM1L. The sequence is that of Mitochondrial dynamics protein MID51 (Mief1) from Rattus norvegicus (Rat).